Consider the following 97-residue polypeptide: MQISAALLCVLLTAAAFTVHVWAQPDGTNSSTCCYVKKQKIPKRNLKSYRKITSSRCPWEAVIFKTKKGMEVCAEAHQKWVEEAIAYLDMKTSTPKP.

An N-terminal signal peptide occupies residues 1–23; the sequence is MQISAALLCVLLTAAAFTVHVWA. Position 24 is a pyrrolidone carboxylic acid (Q24). A glycan (N-linked (GlcNAc...) asparagine) is linked at N29. 2 disulfides stabilise this stretch: C33-C57 and C34-C73.

This sequence belongs to the intercrine beta (chemokine CC) family. In terms of assembly, monomer. Interacts with TNFAIP6 (via Link domain).

It localises to the secreted. In terms of biological role, chemotactic factor that attracts monocytes and eosinophils, but not neutrophils. Augments monocyte anti-tumor activity. The polypeptide is C-C motif chemokine 7 (Ccl7) (Rattus norvegicus (Rat)).